The sequence spans 100 residues: MAKKSLIQREKKRQKLEQKYHLIRRSSKKEISKVRSLSDKWEIYGKLQSPPRNSAPTRLHRRCFSTGRPRANYRDFGLSGHILREMVHACLLPGATRSSW.

This sequence belongs to the universal ribosomal protein uS14 family. Part of the 30S ribosomal subunit.

It is found in the plastid. The protein localises to the chloroplast. In terms of biological role, binds 16S rRNA, required for the assembly of 30S particles. This chain is Small ribosomal subunit protein uS14c, found in Lactuca sativa (Garden lettuce).